Reading from the N-terminus, the 400-residue chain is Probable peptidoglycan glycosyltransferase FtsW (400 aa).

Residues 1–29 (MVIERIKHLASPLQDWVFTPSPKVMFDRQ) are Cytoplasmic-facing. The helical transmembrane segment at 30-50 (LIWIALGLMLTGLVMVASASF) threads the bilayer. Topologically, residues 51-60 (PISTRLTGQP) are periplasmic. A helical membrane pass occupies residues 61-81 (FHFMMRHMLFVFLALSISSIV). Residues 82–95 (LRIELNKWLKYSSH) are Cytoplasmic-facing. Residues 96–116 (LLLISLLLLAAVLVVGKSVNG) form a helical membrane-spanning segment. The Periplasmic portion of the chain corresponds to 117–122 (AARWLP). The helical transmembrane segment at 123–143 (LGIFNLQPAEVAKLSLFVFIA) threads the bilayer. The Cytoplasmic portion of the chain corresponds to 144 to 155 (GYLVRRHGEVRD). A helical membrane pass occupies residues 156-176 (SFRGFVKPLLVLITLAFFLLM). At 177-178 (QP) the chain is on the periplasmic side. The helical transmembrane segment at 179-199 (DLGTTVVMFVTTIAMLFIAGA) threads the bilayer. A topological domain (cytoplasmic) is located at residue Lys-200. A helical membrane pass occupies residues 201–221 (LWQFIALVMGGISLVIVLILA). The Periplasmic segment spans residues 222–290 (EPYRMRRVTS…VFAVIAEELG (69 aa)). A helical membrane pass occupies residues 291–311 (FVGVCLVLCLIFALVFKALLI). The Cytoplasmic portion of the chain corresponds to 312–321 (GRKCLAHDQR). A helical transmembrane segment spans residues 322-342 (FGGFLAFGIGIWFAFQTLVNV). Residues 343–356 (GAAAGIVPTKGLTL) lie on the Periplasmic side of the membrane. Residues 357–377 (PLISYGGSSLIIMSVAVSLLI) traverse the membrane as a helical segment. The Cytoplasmic segment spans residues 378–400 (RIDHECRVYLANEPPRSENEEQK).

Belongs to the SEDS family. FtsW subfamily.

Its subcellular location is the cell inner membrane. It carries out the reaction [GlcNAc-(1-&gt;4)-Mur2Ac(oyl-L-Ala-gamma-D-Glu-L-Lys-D-Ala-D-Ala)](n)-di-trans,octa-cis-undecaprenyl diphosphate + beta-D-GlcNAc-(1-&gt;4)-Mur2Ac(oyl-L-Ala-gamma-D-Glu-L-Lys-D-Ala-D-Ala)-di-trans,octa-cis-undecaprenyl diphosphate = [GlcNAc-(1-&gt;4)-Mur2Ac(oyl-L-Ala-gamma-D-Glu-L-Lys-D-Ala-D-Ala)](n+1)-di-trans,octa-cis-undecaprenyl diphosphate + di-trans,octa-cis-undecaprenyl diphosphate + H(+). It functions in the pathway cell wall biogenesis; peptidoglycan biosynthesis. Its function is as follows. Peptidoglycan polymerase that is essential for cell division. This chain is Probable peptidoglycan glycosyltransferase FtsW, found in Aliivibrio salmonicida (strain LFI1238) (Vibrio salmonicida (strain LFI1238)).